Here is a 157-residue protein sequence, read N- to C-terminus: DNA gyrase inhibitor (157 aa).

This sequence belongs to the DNA gyrase inhibitor family. As to quaternary structure, interacts with DNA gyrase.

It localises to the cytoplasm. Its function is as follows. Inhibits the supercoiling activity of DNA gyrase. Acts by inhibiting DNA gyrase at an early step, prior to (or at the step of) binding of DNA by the gyrase. It protects cells against toxins that target DNA gyrase, by inhibiting activity of these toxins and reducing the formation of lethal double-strand breaks in the cell. In Cronobacter sakazakii (strain ATCC BAA-894) (Enterobacter sakazakii), this protein is DNA gyrase inhibitor.